Consider the following 139-residue polypeptide: Nucleoside diphosphate kinase (139 aa).

ATP-binding residues include lysine 10, phenylalanine 58, arginine 86, threonine 92, arginine 104, and asparagine 114. Histidine 117 (pros-phosphohistidine intermediate) is an active-site residue.

It belongs to the NDK family. In terms of assembly, homotetramer. The cofactor is Mg(2+).

It localises to the cytoplasm. It catalyses the reaction a 2'-deoxyribonucleoside 5'-diphosphate + ATP = a 2'-deoxyribonucleoside 5'-triphosphate + ADP. The catalysed reaction is a ribonucleoside 5'-diphosphate + ATP = a ribonucleoside 5'-triphosphate + ADP. Major role in the synthesis of nucleoside triphosphates other than ATP. The ATP gamma phosphate is transferred to the NDP beta phosphate via a ping-pong mechanism, using a phosphorylated active-site intermediate. The chain is Nucleoside diphosphate kinase from Mycolicibacterium smegmatis (strain ATCC 700084 / mc(2)155) (Mycobacterium smegmatis).